Here is a 212-residue protein sequence, read N- to C-terminus: Thymidylate kinase (212 aa).

11 to 18 (GPEGAGKT) provides a ligand contact to ATP.

The protein belongs to the thymidylate kinase family.

The enzyme catalyses dTMP + ATP = dTDP + ADP. In terms of biological role, phosphorylation of dTMP to form dTDP in both de novo and salvage pathways of dTTP synthesis. The sequence is that of Thymidylate kinase from Streptococcus pneumoniae (strain Taiwan19F-14).